We begin with the raw amino-acid sequence, 518 residues long: Protein MGF 505-6R (518 aa).

ANK repeat units follow at residues 54-83 (SINDALLLAGEEGDTDVVQLLLLWEGNLHY), 129-158 (ECDFICLLQHAVKCDMLSILVKYKEDLLNV), 261-290 (SVNRALSYAVIDNKRKIIDYLVRHENIPRG), 292-322 (IERLLHLAVKKQSSRKTLNLLLSYINYKVKN), and 324-351 (KKLVEHVVDHNSTLVLKILLEKKENLVD).

This sequence belongs to the asfivirus MGF 505 family.

In terms of biological role, plays a role in virus cell tropism, and may be required for efficient virus replication in macrophages. The sequence is that of Protein MGF 505-6R from Ornithodoros (relapsing fever ticks).